Consider the following 1390-residue polypeptide: DNA-directed RNA polymerase subunit beta (1390 aa).

Belongs to the RNA polymerase beta chain family. The RNAP catalytic core consists of 2 alpha, 1 beta, 1 beta' and 1 omega subunit. When a sigma factor is associated with the core the holoenzyme is formed, which can initiate transcription.

It catalyses the reaction RNA(n) + a ribonucleoside 5'-triphosphate = RNA(n+1) + diphosphate. Its function is as follows. DNA-dependent RNA polymerase catalyzes the transcription of DNA into RNA using the four ribonucleoside triphosphates as substrates. The protein is DNA-directed RNA polymerase subunit beta of Chromobacterium violaceum (strain ATCC 12472 / DSM 30191 / JCM 1249 / CCUG 213 / NBRC 12614 / NCIMB 9131 / NCTC 9757 / MK).